The chain runs to 603 residues: Shugoshin (603 aa).

Positions 11 to 74 (HIQELQNILD…NVQLRSQVSL (64 aa)) form a coiled coil. 2 disordered regions span residues 112–164 (ESLP…RSST) and 201–227 (NEID…SNRR). 2 stretches are compositionally biased toward low complexity: residues 146–157 (SVSTGSAHSTSS) and 201–214 (NEID…DNLL). Positions 218–227 (PHKKRKSNRR) are enriched in basic residues. The stretch at 304–325 (KQDILDETEKRDTAVNQKKKLE) forms a coiled coil. The disordered stretch occupies residues 331–399 (PVEELSSSKN…ESVDFDRPRR (69 aa)). Residues 362 to 376 (KVKHSMKSRKPKKNK) show a composition bias toward basic residues. A coiled-coil region spans residues 431–451 (NIQDLQVKYKKSKKVLEKELK). The segment covering 455 to 467 (KAMKSPKKNEKTF) has biased composition (basic and acidic residues). 2 disordered regions span residues 455–519 (KAMK…HSSF) and 583–603 (HNDT…KNKA). The segment covering 483–512 (RPSSTHSTSSVDAECSHNNSHSENINSSIN) has biased composition (low complexity). Residues 583-593 (HNDTNKSSPKT) show a composition bias toward polar residues. The segment covering 594–603 (YRSRSRKNKA) has biased composition (basic residues).

The protein belongs to the shugoshin family.

The protein resides in the nucleus. It is found in the chromosome. The protein localises to the centromere. Its function is as follows. Plays a central role in chromosome cohesion during cell division by preventing premature dissociation of cohesin complex from centromeres after prophase, when most of cohesin complex dissociates from chromosomes arms. This is Shugoshin (SGO1) from Candida glabrata (strain ATCC 2001 / BCRC 20586 / JCM 3761 / NBRC 0622 / NRRL Y-65 / CBS 138) (Yeast).